Consider the following 134-residue polypeptide: Phosphoribosyl-AMP cyclohydrolase (134 aa).

Asp-80 contacts Mg(2+). A Zn(2+)-binding site is contributed by Cys-81. Positions 82 and 84 each coordinate Mg(2+). The Zn(2+) site is built by Cys-98 and Cys-105.

Belongs to the PRA-CH family. Homodimer. The cofactor is Mg(2+). It depends on Zn(2+) as a cofactor.

The protein localises to the cytoplasm. The catalysed reaction is 1-(5-phospho-beta-D-ribosyl)-5'-AMP + H2O = 1-(5-phospho-beta-D-ribosyl)-5-[(5-phospho-beta-D-ribosylamino)methylideneamino]imidazole-4-carboxamide. It functions in the pathway amino-acid biosynthesis; L-histidine biosynthesis; L-histidine from 5-phospho-alpha-D-ribose 1-diphosphate: step 3/9. Its function is as follows. Catalyzes the hydrolysis of the adenine ring of phosphoribosyl-AMP. This chain is Phosphoribosyl-AMP cyclohydrolase, found in Janthinobacterium sp. (strain Marseille) (Minibacterium massiliensis).